The primary structure comprises 589 residues: Deoxynucleoside triphosphate triphosphohydrolase SAMHD1 (589 aa).

Residue Met1 is modified to N-acetylmethionine. The span at 1-10 shows a compositional bias: polar residues; sequence MQSADSQNTP. Positions 1 to 41 are disordered; sequence MQSADSQNTPKRPRRDGSPRTPPDSPLADAETSPSHDLDPD. Position 18 is a phosphoserine (Ser18). Thr21 carries the phosphothreonine modification. A phosphoserine mark is found at Ser33 and Ser88. In terms of domain architecture, SAM spans 45 to 100; it reads WGPEQVWSFLRRCGFSDSELLKRCREKRMSGSLLPFPEDLGISSHGKKMKLLNCIQ. GTP-binding residues include Lys104 and Val105. DGTP is bound at residue Asn107. GTP is bound by residues Asp125, Gln130, and Arg133. Residues Gln137, Leu138, Val144, and Arg152 each coordinate dGTP. Residue Gln137 participates in dATP binding. Gln137 is a binding site for dCTP. Gln137 serves as a coordination point for dTTP. Arg152 lines the dATP pocket. Arg152 provides a ligand contact to dCTP. Arg152 is a binding site for dTTP. Residues 152 to 277 form the HD domain; sequence RFEHSLGVGY…IKDASKWLYK (126 aa). Mn(2+)-binding residues include His155, His194, and Asp195. Residues His198 and His203 each contribute to the dATP site. His198 and His203 together coordinate dCTP. The dTTP site is built by His198 and His203. The active site involves His221. A Mn(2+)-binding site is contributed by Asp300. The dGTP site is built by Lys301, Tyr304, Asp308, Arg322, Arg341, Lys343, Asn347, Arg355, Tyr363, Gln364, His365, and Lys366. DATP-binding residues include Lys301, Tyr304, and Asp308. Positions 301, 304, and 308 each coordinate dCTP. DTTP-binding residues include Lys301, Tyr304, and Asp308. Arg355 lines the dATP pocket. Arg355 serves as a coordination point for dCTP. Gln364 lines the dATP pocket. Gln364 serves as a coordination point for dCTP. Gln364 is a dTTP binding site. 2 residues coordinate GTP: Arg440 and Lys444. Lys457 participates in a covalent cross-link: Glycyl lysine isopeptide (Lys-Gly) (interchain with G-Cter in SUMO2). Lys512 provides a ligand contact to GTP. Lys512 contributes to the dGTP binding site.

It belongs to the SAMHD1 family. As to quaternary structure, homodimer; in absence of GTP and dNTP. Homotetramer; in GTP- and dNTP-bound form. Interacts with MRE11; leading to stimulate the exonuclease activity of MRE11. Interacts with RBBP8/CtIP. Interacts (via its C-terminus) with CD81. It depends on Zn(2+) as a cofactor.

The protein resides in the nucleus. It localises to the chromosome. The catalysed reaction is a 2'-deoxyribonucleoside 5'-triphosphate + H2O = a 2'-deoxyribonucleoside + triphosphate + H(+). It carries out the reaction dATP + H2O = 2'-deoxyadenosine + triphosphate + H(+). It catalyses the reaction dCTP + H2O = 2'-deoxycytidine + triphosphate + H(+). The enzyme catalyses dGTP + H2O = 2'-deoxyguanosine + triphosphate + H(+). The catalysed reaction is dTTP + H2O = thymidine + triphosphate + H(+). With respect to regulation, allosterically activated and regulated via the combined actions of GTP and dNTPs (dATP, dGTP, dTTP and dCTP): Allosteric site 1 binds GTP, while allosteric site 2 binds dNTP. Allosteric activation promotes the formation of highly active homotetramers. In terms of biological role, protein that acts both as a host restriction factor involved in defense response to virus and as a regulator of DNA end resection at stalled replication forks. Has deoxynucleoside triphosphate (dNTPase) activity, which is required to restrict infection by viruses: dNTPase activity reduces cellular dNTP levels to levels too low for retroviral reverse transcription to occur, blocking early-stage virus replication in dendritic and other myeloid cells. Likewise, suppresses LINE-1 retrotransposon activity. In addition to virus restriction, dNTPase activity acts as a regulator of DNA precursor pools by regulating dNTP pools. Functions during S phase at stalled DNA replication forks to promote the resection of gapped or reversed forks: acts by stimulating the exonuclease activity of MRE11, activating the ATR-CHK1 pathway and allowing the forks to restart replication. Its ability to promote degradation of nascent DNA at stalled replication forks is required to prevent induction of type I interferons, thereby preventing chronic inflammation. Ability to promote DNA end resection at stalled replication forks is independent of dNTPase activity. Enhances immunoglobulin hypermutation in B-lymphocytes by promoting transversion mutation. This is Deoxynucleoside triphosphate triphosphohydrolase SAMHD1 from Bos taurus (Bovine).